Consider the following 183-residue polypeptide: Small ribosomal subunit protein uS4c (183 aa).

The 62-residue stretch at 82–143 (MRLDNILFRL…KQRSKALIQN (62 aa)) folds into the S4 RNA-binding domain.

Belongs to the universal ribosomal protein uS4 family. Part of the 30S ribosomal subunit. Contacts protein S5. The interaction surface between S4 and S5 is involved in control of translational fidelity.

The protein localises to the plastid. The protein resides in the chloroplast. Functionally, one of the primary rRNA binding proteins, it binds directly to 16S rRNA where it nucleates assembly of the body of the 30S subunit. With S5 and S12 plays an important role in translational accuracy. The protein is Small ribosomal subunit protein uS4c (rps4) of Aristea capitata.